A 666-amino-acid chain; its full sequence is Collagen alpha-1(XXV) chain (666 aa).

The tract at residues 1–24 (MLVKKLAGKGGGRESGSEDPRPLG) is disordered. At 1–33 (MLVKKLAGKGGGRESGSEDPRPLGQRCAGTMPS) the chain is on the cytoplasmic side. A compositionally biased stretch (basic and acidic residues) spans 11 to 21 (GGRESGSEDPR). A helical; Signal-anchor for type II membrane protein membrane pass occupies residues 34-54 (CTALATLLSVVAVAFCFYLGV). Over 55-666 (KTNDLQARIA…GLPMPGCWQK (612 aa)) the chain is Extracellular. The interval 116 to 168 (LECNCPAGPPGKRGKRGRRGESGPPGQPGPQGPPGPKGDKGEQGDQGPRMVFP) is disordered. In terms of domain architecture, Collagen-like 1 spans 121–164 (PAGPPGKRGKRGRRGESGPPGQPGPQGPPGPKGDKGEQGDQGPR). Over residues 140–151 (PGQPGPQGPPGP) the composition is skewed to pro residues. The tract at residues 181 to 188 (LIKRRLIK) is interaction with amyloid-beta peptide. Disordered stretches follow at residues 189–428 (GDQG…ATEI) and 445–666 (LTVT…CWQK). Collagen-like domains are found at residues 192 to 247 (GQAG…QKGS), 249 to 308 (GAPG…PGSS), 311 to 370 (GIKG…AGPP), 373 to 425 (GERG…DPGA), 455 to 514 (GPQG…KGEK), 529 to 588 (GPPG…KGAM), and 589 to 648 (GEPG…DGLD). Residues 196 to 208 (PPGPPGPPGPRGP) are compositionally biased toward pro residues. Positions 230-245 (PGEQGLMGPLGPPGQK) are enriched in low complexity. A compositionally biased stretch (basic and acidic residues) spans 280-290 (EPGKEGEKGDA). Residues 336–358 (LPGIKGEPGFIGPQGEPGLPGLP) show a composition bias toward low complexity. Basic and acidic residues-rich tracts occupy residues 361–377 (KGDR…ERGD) and 398–407 (SKGDRGDKGD). Residues 457-466 (QGLQGPKGEQ) show a composition bias toward low complexity. Gly residues predominate over residues 494 to 503 (GEKGGLGLPG). Over residues 528-543 (IGPPGPPGPHGPPGPM) the composition is skewed to pro residues. The span at 615–638 (RGEKGDLGEKGEKGFRGVKGEKGE) shows a compositional bias: basic and acidic residues.

As to quaternary structure, forms homodimers and homotrimers. Binds to the fibrillized forms of amyloid-beta protein 40 (beta-APP40) and amyloid-betad protein 42 (beta-APP42). Found associated with beta-APP42 more frequently than with beta-APP40. Undergoes proteolytic cleavage by furin protease to yield the soluble collagen-like Alzheimer amyloid plaque component. Post-translationally, glycosylated. In terms of processing, hydroxylated on proline and lysine residues. Expressed predominantly in neurons with low levels also detected in heart, testis and eye.

It localises to the membrane. Inhibits fibrillization of amyloid-beta peptide during the elongation phase. Has also been shown to assemble amyloid fibrils into protease-resistant aggregates. Binds heparin. This chain is Collagen alpha-1(XXV) chain, found in Mus musculus (Mouse).